The chain runs to 356 residues: Protein-glutamate methylesterase/protein-glutamine glutaminase 3 (356 aa).

One can recognise a Response regulatory domain in the interval 3–120; sequence KVAIVDDSAV…KGFLEESQAR (118 aa). At Asp54 the chain carries 4-aspartylphosphate. Residues 165–356 enclose the CheB-type methylesterase domain; sequence NQTTDRVVAL…AEEIIAFTKQ (192 aa). Catalysis depends on residues Ser177, His203, and Asp299.

It belongs to the CheB family. Post-translationally, phosphorylated by CheA. Phosphorylation of the N-terminal regulatory domain activates the methylesterase activity.

Its subcellular location is the cytoplasm. It catalyses the reaction [protein]-L-glutamate 5-O-methyl ester + H2O = L-glutamyl-[protein] + methanol + H(+). It carries out the reaction L-glutaminyl-[protein] + H2O = L-glutamyl-[protein] + NH4(+). Functionally, involved in chemotaxis. Part of a chemotaxis signal transduction system that modulates chemotaxis in response to various stimuli. Catalyzes the demethylation of specific methylglutamate residues introduced into the chemoreceptors (methyl-accepting chemotaxis proteins or MCP) by CheR. Also mediates the irreversible deamidation of specific glutamine residues to glutamic acid. This is Protein-glutamate methylesterase/protein-glutamine glutaminase 3 from Shewanella oneidensis (strain ATCC 700550 / JCM 31522 / CIP 106686 / LMG 19005 / NCIMB 14063 / MR-1).